Consider the following 122-residue polypeptide: Histone H2B, gonadal (122 aa).

The interval 1 to 31 is disordered; sequence MPPKVSSKGAKKAGKAKAARSGDKKRKRRRK. The span at 9–31 shows a compositional bias: basic residues; sequence GAKKAGKAKAARSGDKKRKRRRK. Ser109 is a glycosylation site (O-linked (GlcNAc) serine). Lys117 is covalently cross-linked (Glycyl lysine isopeptide (Lys-Gly) (interchain with G-Cter in ubiquitin)).

It belongs to the histone H2B family. In terms of assembly, the nucleosome is a histone octamer containing two molecules each of H2A, H2B, H3 and H4 assembled in one H3-H4 heterotetramer and two H2A-H2B heterodimers. The octamer wraps approximately 147 bp of DNA. Monoubiquitination of Lys-117 gives a specific tag for epigenetic transcriptional activation and is also prerequisite for histone H3 'Lys-4' and 'Lys-79' methylation. In terms of processing, glcNAcylation at Ser-109 promotes monoubiquitination of Lys-117. It fluctuates in response to extracellular glucose, and associates with transcribed genes.

The protein resides in the nucleus. It is found in the chromosome. In terms of biological role, core component of nucleosome. Nucleosomes wrap and compact DNA into chromatin, limiting DNA accessibility to the cellular machineries which require DNA as a template. Histones thereby play a central role in transcription regulation, DNA repair, DNA replication and chromosomal stability. DNA accessibility is regulated via a complex set of post-translational modifications of histones, also called histone code, and nucleosome remodeling. The sequence is that of Histone H2B, gonadal from Patella granatina (Sandpaper limpet).